The following is an 800-amino-acid chain: Phenylalanine--tRNA ligase beta subunit (800 aa).

A tRNA-binding domain is found at 39-154; that stretch reads TKDIKNLVVG…ESQVPGTDAL (116 aa). The region spanning 408–483 is the B5 domain; sequence AFITPIDITA…RIYGYDDIPS (76 aa). Mg(2+)-binding residues include D461, D467, E470, and E471. One can recognise an FDX-ACB domain in the interval 708 to 800; that stretch reads PIFPGMSRDI…ALIEQGAVIR (93 aa).

Belongs to the phenylalanyl-tRNA synthetase beta subunit family. Type 1 subfamily. In terms of assembly, tetramer of two alpha and two beta subunits. Mg(2+) serves as cofactor.

Its subcellular location is the cytoplasm. It catalyses the reaction tRNA(Phe) + L-phenylalanine + ATP = L-phenylalanyl-tRNA(Phe) + AMP + diphosphate + H(+). The sequence is that of Phenylalanine--tRNA ligase beta subunit from Staphylococcus aureus (strain bovine RF122 / ET3-1).